The primary structure comprises 827 residues: Glycerol-3-phosphate acyltransferase (827 aa).

Positions 309-314 (CHRSHI) match the HXXXXD motif motif.

It belongs to the GPAT/DAPAT family.

The protein localises to the cell inner membrane. The enzyme catalyses sn-glycerol 3-phosphate + an acyl-CoA = a 1-acyl-sn-glycero-3-phosphate + CoA. The protein operates within phospholipid metabolism; CDP-diacylglycerol biosynthesis; CDP-diacylglycerol from sn-glycerol 3-phosphate: step 1/3. The chain is Glycerol-3-phosphate acyltransferase from Ectopseudomonas mendocina (strain ymp) (Pseudomonas mendocina).